The primary structure comprises 353 residues: N-terminal EF-hand calcium-binding protein 3 (353 aa).

The 36-residue stretch at 27–62 (AGHALFQDVFRRADKNDDGKLSFEEFQNYFADGVLS) folds into the EF-hand domain. Ca(2+) contacts are provided by Asp-40, Asn-42, Asp-44, Lys-46, and Glu-51. The segment at 172 to 181 (IKAQSRPCGS) is required for interaction with APBA3. Over residues 193–203 (SWSPSWSPGSS) the composition is skewed to low complexity. A disordered region spans residues 193–213 (SWSPSWSPGSSDTGRSSEAEQ). The span at 204–213 (DTGRSSEAEQ) shows a compositional bias: polar residues. One can recognise an ABM domain in the interval 253 to 342 (LVAQRQVQVA…QAPDTLTTVF (90 aa)).

In terms of assembly, interacts with the N-terminal domain of APBA2. Interacts with NEK2. Interacts with APBA3; APBA3 seems to mediate the interaction between NECAB3 and HIF1AN. In terms of processing, phosphorylated by NEK2. Widely expressed, with highest levels in the brain.

It localises to the golgi apparatus. Its function is as follows. Inhibits the interaction of APBA2 with amyloid-beta precursor protein (APP), and hence allows formation of amyloid-beta. May enhance the activity of HIF1A and thus promote glycolysis under normoxic conditions; the function requires its ABM domain and may implicate the stabilization of the interaction between HIF1AN and APBA3. This Mus musculus (Mouse) protein is N-terminal EF-hand calcium-binding protein 3 (Necab3).